Consider the following 314-residue polypeptide: Aspartate carbamoyltransferase catalytic subunit (314 aa).

The carbamoyl phosphate site is built by Arg-55 and Thr-56. Lys-83 contributes to the L-aspartate binding site. Carbamoyl phosphate contacts are provided by Arg-105, His-139, and Gln-142. L-aspartate contacts are provided by Arg-172 and Arg-226. Residues Gly-267 and Pro-268 each coordinate carbamoyl phosphate.

It belongs to the aspartate/ornithine carbamoyltransferase superfamily. ATCase family. In terms of assembly, heterododecamer (2C3:3R2) of six catalytic PyrB chains organized as two trimers (C3), and six regulatory PyrI chains organized as three dimers (R2).

The catalysed reaction is carbamoyl phosphate + L-aspartate = N-carbamoyl-L-aspartate + phosphate + H(+). It functions in the pathway pyrimidine metabolism; UMP biosynthesis via de novo pathway; (S)-dihydroorotate from bicarbonate: step 2/3. In terms of biological role, catalyzes the condensation of carbamoyl phosphate and aspartate to form carbamoyl aspartate and inorganic phosphate, the committed step in the de novo pyrimidine nucleotide biosynthesis pathway. The polypeptide is Aspartate carbamoyltransferase catalytic subunit (Rhodococcus opacus (strain B4)).